The primary structure comprises 398 residues: S-adenosylmethionine synthase 2 (398 aa).

His-16 contacts ATP. Asp-18 serves as a coordination point for Mg(2+). Residue Glu-51 coordinates K(+). Residues Glu-64 and Gln-108 each coordinate L-methionine. Residues 108–118 (QSADIAQGVDA) are flexible loop. ATP-binding positions include 176 to 178 (DSK), 242 to 243 (KF), Asp-251, 257 to 258 (RK), Ala-274, and Lys-278. Asp-251 provides a ligand contact to L-methionine. Lys-282 serves as a coordination point for L-methionine.

This sequence belongs to the AdoMet synthase family. As to quaternary structure, homotetramer; dimer of dimers. The cofactor is Mg(2+). It depends on K(+) as a cofactor.

The protein localises to the cytoplasm. The catalysed reaction is L-methionine + ATP + H2O = S-adenosyl-L-methionine + phosphate + diphosphate. It functions in the pathway amino-acid biosynthesis; S-adenosyl-L-methionine biosynthesis; S-adenosyl-L-methionine from L-methionine: step 1/1. In terms of biological role, catalyzes the formation of S-adenosylmethionine (AdoMet) from methionine and ATP. The overall synthetic reaction is composed of two sequential steps, AdoMet formation and the subsequent tripolyphosphate hydrolysis which occurs prior to release of AdoMet from the enzyme. In Rhodopseudomonas palustris (strain BisB18), this protein is S-adenosylmethionine synthase 2.